Reading from the N-terminus, the 167-residue chain is Ribosome maturation factor RimM (167 aa).

The region spanning 92–166 (DDEFYHTDLI…RIVADPPEGL (75 aa)) is the PRC barrel domain.

Belongs to the RimM family. In terms of assembly, binds ribosomal protein uS19.

It localises to the cytoplasm. An accessory protein needed during the final step in the assembly of 30S ribosomal subunit, possibly for assembly of the head region. Essential for efficient processing of 16S rRNA. May be needed both before and after RbfA during the maturation of 16S rRNA. It has affinity for free ribosomal 30S subunits but not for 70S ribosomes. This is Ribosome maturation factor RimM from Ruegeria pomeroyi (strain ATCC 700808 / DSM 15171 / DSS-3) (Silicibacter pomeroyi).